Reading from the N-terminus, the 268-residue chain is Ribosomal RNA small subunit methyltransferase A (268 aa).

Positions 18, 20, 45, 66, 91, and 112 each coordinate S-adenosyl-L-methionine.

This sequence belongs to the class I-like SAM-binding methyltransferase superfamily. rRNA adenine N(6)-methyltransferase family. RsmA subfamily.

It localises to the cytoplasm. The catalysed reaction is adenosine(1518)/adenosine(1519) in 16S rRNA + 4 S-adenosyl-L-methionine = N(6)-dimethyladenosine(1518)/N(6)-dimethyladenosine(1519) in 16S rRNA + 4 S-adenosyl-L-homocysteine + 4 H(+). Its function is as follows. Specifically dimethylates two adjacent adenosines (A1518 and A1519) in the loop of a conserved hairpin near the 3'-end of 16S rRNA in the 30S particle. May play a critical role in biogenesis of 30S subunits. This chain is Ribosomal RNA small subunit methyltransferase A, found in Shewanella sp. (strain MR-7).